Reading from the N-terminus, the 138-residue chain is Phosphoribosyl-AMP cyclohydrolase (138 aa).

Aspartate 84 serves as a coordination point for Mg(2+). Cysteine 85 is a binding site for Zn(2+). The Mg(2+) site is built by aspartate 86 and aspartate 88. 2 residues coordinate Zn(2+): cysteine 102 and cysteine 109.

It belongs to the PRA-CH family. Homodimer. The cofactor is Mg(2+). Zn(2+) serves as cofactor.

The protein resides in the cytoplasm. It catalyses the reaction 1-(5-phospho-beta-D-ribosyl)-5'-AMP + H2O = 1-(5-phospho-beta-D-ribosyl)-5-[(5-phospho-beta-D-ribosylamino)methylideneamino]imidazole-4-carboxamide. It participates in amino-acid biosynthesis; L-histidine biosynthesis; L-histidine from 5-phospho-alpha-D-ribose 1-diphosphate: step 3/9. Its function is as follows. Catalyzes the hydrolysis of the adenine ring of phosphoribosyl-AMP. In Burkholderia vietnamiensis (strain G4 / LMG 22486) (Burkholderia cepacia (strain R1808)), this protein is Phosphoribosyl-AMP cyclohydrolase.